The following is a 214-amino-acid chain: Threonylcarbamoyl-AMP synthase (214 aa).

Residues T9–R214 form the YrdC-like domain.

Belongs to the SUA5 family. TsaC subfamily.

Its subcellular location is the cytoplasm. The enzyme catalyses L-threonine + hydrogencarbonate + ATP = L-threonylcarbamoyladenylate + diphosphate + H2O. Its function is as follows. Required for the formation of a threonylcarbamoyl group on adenosine at position 37 (t(6)A37) in tRNAs that read codons beginning with adenine. Catalyzes the conversion of L-threonine, HCO(3)(-)/CO(2) and ATP to give threonylcarbamoyl-AMP (TC-AMP) as the acyladenylate intermediate, with the release of diphosphate. The chain is Threonylcarbamoyl-AMP synthase from Psychrobacter cryohalolentis (strain ATCC BAA-1226 / DSM 17306 / VKM B-2378 / K5).